The sequence spans 55 residues: MPQLNPHPWFFIMLASWLTFSLIIQPKLLTFVTMNPPSNKPPIAPSTTPWTWPWT.

Residues 10-32 (FFIMLASWLTFSLIIQPKLLTFV) traverse the membrane as a helical segment.

The protein belongs to the ATPase protein 8 family. In terms of assembly, component of the ATP synthase complex composed at least of ATP5F1A/subunit alpha, ATP5F1B/subunit beta, ATP5MC1/subunit c (homooctomer), MT-ATP6/subunit a, MT-ATP8/subunit 8, ATP5ME/subunit e, ATP5MF/subunit f, ATP5MG/subunit g, ATP5MK/subunit k, ATP5MJ/subunit j, ATP5F1C/subunit gamma, ATP5F1D/subunit delta, ATP5F1E/subunit epsilon, ATP5PF/subunit F6, ATP5PB/subunit b, ATP5PD/subunit d, ATP5PO/subunit OSCP. ATP synthase complex consists of a soluble F(1) head domain (subunits alpha(3) and beta(3)) - the catalytic core - and a membrane F(0) domain - the membrane proton channel (subunits c, a, 8, e, f, g, k and j). These two domains are linked by a central stalk (subunits gamma, delta, and epsilon) rotating inside the F1 region and a stationary peripheral stalk (subunits F6, b, d, and OSCP).

It is found in the mitochondrion membrane. Subunit 8, of the mitochondrial membrane ATP synthase complex (F(1)F(0) ATP synthase or Complex V) that produces ATP from ADP in the presence of a proton gradient across the membrane which is generated by electron transport complexes of the respiratory chain. ATP synthase complex consist of a soluble F(1) head domain - the catalytic core - and a membrane F(1) domain - the membrane proton channel. These two domains are linked by a central stalk rotating inside the F(1) region and a stationary peripheral stalk. During catalysis, ATP synthesis in the catalytic domain of F(1) is coupled via a rotary mechanism of the central stalk subunits to proton translocation. In vivo, can only synthesize ATP although its ATP hydrolase activity can be activated artificially in vitro. Part of the complex F(0) domain. The chain is ATP synthase F(0) complex subunit 8 from Loxigilla noctis (Lesser Antillean bullfinch).